The sequence spans 478 residues: Alpha-1,3-mannosyl-glycoprotein 4-beta-N-acetylglucosaminyltransferase C (478 aa).

Residues 1–23 lie on the Cytoplasmic side of the membrane; sequence MFKFHQMKHIFEILDKMRCLRKR. The helical; Signal-anchor for type II membrane protein transmembrane segment at 24 to 44 threads the bilayer; sequence STVSFLGVLVIFLLFMNLYIE. The Lumenal portion of the chain corresponds to 45–478; it reads DSYVLEGDKQ…IIRSISIWTS (434 aa). N-linked (GlcNAc...) asparagine glycans are attached at residues asparagine 84 and asparagine 215.

It belongs to the glycosyltransferase 54 family. Requires a divalent metal cation as cofactor.

It localises to the golgi apparatus membrane. The enzyme catalyses N(4)-{beta-D-GlcNAc-(1-&gt;2)-alpha-D-Man-(1-&gt;3)-[beta-D-GlcNAc-(1-&gt;2)-alpha-D-Man-(1-&gt;6)]-beta-D-Man-(1-&gt;4)-beta-D-GlcNAc-(1-&gt;4)-beta-D-GlcNAc}-L-asparaginyl-[protein] + UDP-N-acetyl-alpha-D-glucosamine = N(4)-{beta-D-GlcNAc-(1-&gt;2)-[beta-D-GlcNAc-(1-&gt;4)]-alpha-D-Man-(1-&gt;3)-[beta-D-GlcNAc-(1-&gt;2)-alpha-D-Man-(1-&gt;6)]-beta-D-Man-(1-&gt;4)-beta-D-GlcNAc-(1-&gt;4)-beta-D-GlcNAc}-L-asparaginyl-[protein] + UDP + H(+). Its pathway is protein modification; protein glycosylation. Its function is as follows. Glycosyltransferase that participates in the transfer of N-acetylglucosamine (GlcNAc) to the core mannose residues of N-linked glycans. Catalyzes the formation of the GlcNAcbeta1-4 branch on the GlcNAcbeta1-2Manalpha1-3 arm of the core structure of N-linked glycans. Essential for the production of tri- and tetra-antennary N-linked sugar chains. Does not catalyze the transfer of GlcNAc to the Manalpha1-6 arm to form GlcNAcBeta1-4Manalpha1-6 linkage ('GnT-VI' activity). In Macaca fascicularis (Crab-eating macaque), this protein is Alpha-1,3-mannosyl-glycoprotein 4-beta-N-acetylglucosaminyltransferase C (MGAT4C).